The following is a 314-amino-acid chain: Phosphoribosylaminoimidazole-succinocarboxamide synthase (314 aa).

This sequence belongs to the SAICAR synthetase family.

It carries out the reaction 5-amino-1-(5-phospho-D-ribosyl)imidazole-4-carboxylate + L-aspartate + ATP = (2S)-2-[5-amino-1-(5-phospho-beta-D-ribosyl)imidazole-4-carboxamido]succinate + ADP + phosphate + 2 H(+). It functions in the pathway purine metabolism; IMP biosynthesis via de novo pathway; 5-amino-1-(5-phospho-D-ribosyl)imidazole-4-carboxamide from 5-amino-1-(5-phospho-D-ribosyl)imidazole-4-carboxylate: step 1/2. This Bacteroides thetaiotaomicron (strain ATCC 29148 / DSM 2079 / JCM 5827 / CCUG 10774 / NCTC 10582 / VPI-5482 / E50) protein is Phosphoribosylaminoimidazole-succinocarboxamide synthase.